The following is a 325-amino-acid chain: Terpene synthase 11 (325 aa).

Positions 97 to 102 match the DDxx(x)D/E motif motif; sequence DDEYLE. The NDxxSxxxD/E motif signature appears at 227-235; sequence NDIYSFVKE.

The protein belongs to the terpene synthase family.

It catalyses the reaction (2E,6E)-farnesyl diphosphate = (E)-beta-farnesene + diphosphate. The catalysed reaction is (2E,6E)-farnesyl diphosphate = (3E,6E)-alpha-farnesene + diphosphate. It carries out the reaction geranylgeranyl diphosphate + H2O = (S)-(+)-nephthenol + diphosphate. In terms of biological role, terpene synthase that converts its substrate farnesyl diphosphate (FPP) into the sesquiterpenes (E)-beta-farnesene and (E,E)-alpha-farnesene. TPS11 also converts geranylgeranyl diphosphate (GGPP) into the diterpene (S)-nephthenol. The chain is Terpene synthase 11 from Dictyostelium purpureum (Slime mold).